The primary structure comprises 312 residues: Pimeloyl-[acyl-carrier protein] methyl ester esterase (312 aa).

The region spanning 17–241 is the AB hydrolase-1 domain; sequence VYLIHGWGAN…KAAHAPFLSH (225 aa). Substrate contacts are provided by residues tryptophan 23, 83–84, and 145–149; these read SL and FLQLQ. The active-site Nucleophile is serine 83. Active-site residues include aspartate 207 and histidine 235. Histidine 235 lines the substrate pocket.

It belongs to the AB hydrolase superfamily. Carboxylesterase BioH family. Monomer.

Its subcellular location is the cytoplasm. It catalyses the reaction 6-carboxyhexanoyl-[ACP] methyl ester + H2O = 6-carboxyhexanoyl-[ACP] + methanol + H(+). It functions in the pathway cofactor biosynthesis; biotin biosynthesis. Its function is as follows. The physiological role of BioH is to remove the methyl group introduced by BioC when the pimeloyl moiety is complete. It allows to synthesize pimeloyl-ACP via the fatty acid synthetic pathway through the hydrolysis of the ester bonds of pimeloyl-ACP esters. This is Pimeloyl-[acyl-carrier protein] methyl ester esterase from Neisseria meningitidis serogroup A / serotype 4A (strain DSM 15465 / Z2491).